The primary structure comprises 606 residues: Mannan endo-1,4-beta-mannosidase A (606 aa).

The N-terminal stretch at 1–19 (MKSLNVILTLLSLIISVLS) is a signal peptide. The 119-residue stretch at 22–140 (VYYEAEDGKL…WMWVDAFVIN (119 aa)) folds into the CBM6 domain. Residues 164–458 (PAAKKLYDFL…FNHKTVMNMD (295 aa)) enclose the GH26 domain. Trp285 provides a ligand contact to substrate. Catalysis depends on Glu318, which acts as the Proton donor. Substrate contacts are provided by Trp323 and Tyr378. Glu406 functions as the Nucleophile in the catalytic mechanism. Positions 472-489 (SGSSHNGNSESNSNTGNS) are linker. CBM10 domains lie at 491–527 (ECWSINLGYPCCIGDYVVTTDENGDWGVENNEWCGIV), 530–566 (SCWSEPLGYPCCVGNTVISADESGDWGVENNEWCGIV), and 569–605 (SCWAEFLGYPCCVGNTVISTDEFGDWGVENDDWCGIL). Trp493 contributes to the substrate binding site.

It belongs to the glycosyl hydrolase 26 family.

The enzyme catalyses Random hydrolysis of (1-&gt;4)-beta-D-mannosidic linkages in mannans, galactomannans and glucomannans.. In terms of biological role, hydrolyzes 1,4-beta linked polysaccharide backbones of mannans, one of the major hemicellulose components in hardwoods and softwoods. Shows very high activity against mannohexaose but not against mannopentaose and smaller mannooligosaccharides. The major products released from mannooligosaccharide hydrolysis are mannose and mannobiose. The reiterated 40 AA domain is involved in binding the cellulase-hemicellulase complex. The polypeptide is Mannan endo-1,4-beta-mannosidase A (MANA) (Piromyces sp).